The primary structure comprises 193 residues: Acyl carrier protein phosphodiesterase (193 aa).

It belongs to the AcpH family.

It carries out the reaction holo-[ACP] + H2O = apo-[ACP] + (R)-4'-phosphopantetheine + H(+). Converts holo-ACP to apo-ACP by hydrolytic cleavage of the phosphopantetheine prosthetic group from ACP. This is Acyl carrier protein phosphodiesterase from Salmonella newport (strain SL254).